The sequence spans 112 residues: UPF0375 protein R05A10.4 (112 aa).

An N-terminal signal peptide occupies residues 1 to 19; it reads MNLSIFSAIIFSITIASSA. N-linked (GlcNAc...) asparagine glycosylation occurs at N59.

The protein belongs to the UPF0375 family.

The protein localises to the secreted. The protein is UPF0375 protein R05A10.4 of Caenorhabditis elegans.